Consider the following 329-residue polypeptide: N-acetyl-gamma-glutamyl-phosphate reductase (329 aa).

Residue Cys155 is part of the active site.

Belongs to the NAGSA dehydrogenase family. Type 1 subfamily.

It is found in the cytoplasm. It carries out the reaction N-acetyl-L-glutamate 5-semialdehyde + phosphate + NADP(+) = N-acetyl-L-glutamyl 5-phosphate + NADPH + H(+). The protein operates within amino-acid biosynthesis; L-arginine biosynthesis; N(2)-acetyl-L-ornithine from L-glutamate: step 3/4. Catalyzes the NADPH-dependent reduction of N-acetyl-5-glutamyl phosphate to yield N-acetyl-L-glutamate 5-semialdehyde. The sequence is that of N-acetyl-gamma-glutamyl-phosphate reductase from Shewanella piezotolerans (strain WP3 / JCM 13877).